Here is a 191-residue protein sequence, read N- to C-terminus: Orotate phosphoribosyltransferase (191 aa).

A 5-phospho-alpha-D-ribose 1-diphosphate-binding site is contributed by 116–124; the sequence is EDVVTTGGS. Thr-120 and Arg-148 together coordinate orotate.

The protein belongs to the purine/pyrimidine phosphoribosyltransferase family. PyrE subfamily. As to quaternary structure, homodimer. Mg(2+) serves as cofactor.

The enzyme catalyses orotidine 5'-phosphate + diphosphate = orotate + 5-phospho-alpha-D-ribose 1-diphosphate. It functions in the pathway pyrimidine metabolism; UMP biosynthesis via de novo pathway; UMP from orotate: step 1/2. In terms of biological role, catalyzes the transfer of a ribosyl phosphate group from 5-phosphoribose 1-diphosphate to orotate, leading to the formation of orotidine monophosphate (OMP). This chain is Orotate phosphoribosyltransferase, found in Heliobacterium modesticaldum (strain ATCC 51547 / Ice1).